A 217-amino-acid chain; its full sequence is Ribonuclease HII (217 aa).

Residues 26 to 215 (EIVCGVDEAG…VREALDLMAG (190 aa)) enclose the RNase H type-2 domain. 3 residues coordinate a divalent metal cation: D32, E33, and D124.

The protein belongs to the RNase HII family. Requires Mn(2+) as cofactor. Mg(2+) serves as cofactor.

The protein resides in the cytoplasm. It catalyses the reaction Endonucleolytic cleavage to 5'-phosphomonoester.. Its function is as follows. Endonuclease that specifically degrades the RNA of RNA-DNA hybrids. The polypeptide is Ribonuclease HII (Burkholderia ambifaria (strain ATCC BAA-244 / DSM 16087 / CCUG 44356 / LMG 19182 / AMMD) (Burkholderia cepacia (strain AMMD))).